Here is a 70-residue protein sequence, read N- to C-terminus: Putative membrane protein insertion efficiency factor (70 aa).

This sequence belongs to the UPF0161 family.

Its subcellular location is the cell inner membrane. Functionally, could be involved in insertion of integral membrane proteins into the membrane. In Francisella tularensis subsp. tularensis (strain SCHU S4 / Schu 4), this protein is Putative membrane protein insertion efficiency factor.